The chain runs to 282 residues: Release factor glutamine methyltransferase (282 aa).

S-adenosyl-L-methionine is bound by residues 120-124, aspartate 143, and asparagine 189; that span reads GVGSG. 189-192 provides a ligand contact to substrate; it reads NPPY.

This sequence belongs to the protein N5-glutamine methyltransferase family. PrmC subfamily.

It carries out the reaction L-glutaminyl-[peptide chain release factor] + S-adenosyl-L-methionine = N(5)-methyl-L-glutaminyl-[peptide chain release factor] + S-adenosyl-L-homocysteine + H(+). Methylates the class 1 translation termination release factors RF1/PrfA and RF2/PrfB on the glutamine residue of the universally conserved GGQ motif. This chain is Release factor glutamine methyltransferase, found in Dictyoglomus turgidum (strain DSM 6724 / Z-1310).